We begin with the raw amino-acid sequence, 251 residues long: GTP cyclohydrolase 1 type 2 homolog (251 aa).

H64, H65, D102, H219, and E223 together coordinate a divalent metal cation.

The protein belongs to the GTP cyclohydrolase I type 2/NIF3 family. In terms of assembly, homohexamer.

This chain is GTP cyclohydrolase 1 type 2 homolog, found in Chlamydia pneumoniae (Chlamydophila pneumoniae).